The chain runs to 1040 residues: Multidrug resistance protein MdtB (1040 aa).

The next 12 helical transmembrane spans lie at 16-36 (FIMR…AGII), 347-367 (LMMA…NIPA), 369-389 (IIPG…MVFL), 396-416 (LTLM…IVVI), 440-460 (IGFT…PLLF), 472-492 (FAIT…TLTP), 537-557 (WLTL…WVFI), 863-883 (LGST…VLGI), 888-908 (FIHP…ALLA), 911-931 (IAGS…IGIV), 968-988 (ILMT…STGV), and 998-1018 (IGMV…TPVI).

It belongs to the resistance-nodulation-cell division (RND) (TC 2.A.6) family. MdtB subfamily. In terms of assembly, part of a tripartite efflux system composed of MdtA, MdtB and MdtC. MdtB forms a heteromultimer with MdtC.

The protein localises to the cell inner membrane. The protein is Multidrug resistance protein MdtB of Shigella sonnei (strain Ss046).